A 422-amino-acid polypeptide reads, in one-letter code: Enolase (422 aa).

Q162 contacts (2R)-2-phosphoglycerate. E204 acts as the Proton donor in catalysis. Mg(2+)-binding residues include D241, E285, and D312. Residues K337, R366, S367, and K388 each contribute to the (2R)-2-phosphoglycerate site. K337 (proton acceptor) is an active-site residue.

It belongs to the enolase family. Mg(2+) serves as cofactor.

The protein localises to the cytoplasm. It is found in the secreted. It localises to the cell surface. It carries out the reaction (2R)-2-phosphoglycerate = phosphoenolpyruvate + H2O. Its pathway is carbohydrate degradation; glycolysis; pyruvate from D-glyceraldehyde 3-phosphate: step 4/5. Functionally, catalyzes the reversible conversion of 2-phosphoglycerate (2-PG) into phosphoenolpyruvate (PEP). It is essential for the degradation of carbohydrates via glycolysis. This chain is Enolase, found in Streptococcus thermophilus.